Consider the following 198-residue polypeptide: Pyridoxal 5'-phosphate synthase subunit PdxT (198 aa).

50 to 52 (GES) is a binding site for L-glutamine. Cys-82 functions as the Nucleophile in the catalytic mechanism. L-glutamine-binding positions include Arg-111 and 140-141 (IR). Active-site charge relay system residues include His-177 and Glu-179.

Belongs to the glutaminase PdxT/SNO family. In the presence of PdxS, forms a dodecamer of heterodimers. Only shows activity in the heterodimer.

The enzyme catalyses aldehydo-D-ribose 5-phosphate + D-glyceraldehyde 3-phosphate + L-glutamine = pyridoxal 5'-phosphate + L-glutamate + phosphate + 3 H2O + H(+). It catalyses the reaction L-glutamine + H2O = L-glutamate + NH4(+). It functions in the pathway cofactor biosynthesis; pyridoxal 5'-phosphate biosynthesis. Catalyzes the hydrolysis of glutamine to glutamate and ammonia as part of the biosynthesis of pyridoxal 5'-phosphate. The resulting ammonia molecule is channeled to the active site of PdxS. This is Pyridoxal 5'-phosphate synthase subunit PdxT from Leifsonia xyli subsp. xyli (strain CTCB07).